The primary structure comprises 616 residues: UvrABC system protein C (616 aa).

Positions 12–97 (NDAGVYQYFD…IKQLKPKYNI (86 aa)) constitute a GIY-YIG domain. Residues 203–238 (TKLISKLNEKMLQYSNDFRFEEAMTLRDRIKTIEKS) enclose the UVR domain.

The protein belongs to the UvrC family. As to quaternary structure, interacts with UvrB in an incision complex.

It localises to the cytoplasm. Its function is as follows. The UvrABC repair system catalyzes the recognition and processing of DNA lesions. UvrC both incises the 5' and 3' sides of the lesion. The N-terminal half is responsible for the 3' incision and the C-terminal half is responsible for the 5' incision. The sequence is that of UvrABC system protein C from Aliarcobacter butzleri (strain RM4018) (Arcobacter butzleri).